A 101-amino-acid chain; its full sequence is Small ribosomal subunit protein uS14 (101 aa).

It belongs to the universal ribosomal protein uS14 family. Part of the 30S ribosomal subunit. Contacts proteins S3 and S10.

In terms of biological role, binds 16S rRNA, required for the assembly of 30S particles and may also be responsible for determining the conformation of the 16S rRNA at the A site. In Neorickettsia sennetsu (strain ATCC VR-367 / Miyayama) (Ehrlichia sennetsu), this protein is Small ribosomal subunit protein uS14.